The chain runs to 612 residues: Protein brambleberry (612 aa).

An N-terminal signal peptide occupies residues 1-20 (MALWFVLLWVSSLQYAEVEA). A run of 2 helical transmembrane segments spans residues 364–384 (LWTCVMHAGYFLLCAVLLSFL) and 417–437 (LTLLLFTLSLGRWFVLQLLWA). 2 disordered regions span residues 452-476 (LSIYPPKEKTPEKQHEFGEKCPASS) and 555-574 (NRSRSSSPNQSLASSSSFSG). Residues 457–470 (PKEKTPEKQHEFGE) are compositionally biased toward basic and acidic residues. Residues 556 to 574 (RSRSSSPNQSLASSSSFSG) are compositionally biased toward low complexity.

It is found in the nucleus membrane. In terms of biological role, required for nuclear membrane fusion during karyogamy. This chain is Protein brambleberry (bmb), found in Danio rerio (Zebrafish).